Consider the following 498-residue polypeptide: ATP synthase subunit beta, chloroplastic (498 aa).

172 to 179 (GGAGVGKT) contributes to the ATP binding site.

It belongs to the ATPase alpha/beta chains family. F-type ATPases have 2 components, CF(1) - the catalytic core - and CF(0) - the membrane proton channel. CF(1) has five subunits: alpha(3), beta(3), gamma(1), delta(1), epsilon(1). CF(0) has four main subunits: a(1), b(1), b'(1) and c(9-12).

It localises to the plastid. The protein resides in the chloroplast thylakoid membrane. It carries out the reaction ATP + H2O + 4 H(+)(in) = ADP + phosphate + 5 H(+)(out). In terms of biological role, produces ATP from ADP in the presence of a proton gradient across the membrane. The catalytic sites are hosted primarily by the beta subunits. The sequence is that of ATP synthase subunit beta, chloroplastic from Nicotiana sylvestris (Wood tobacco).